The primary structure comprises 413 residues: Phosphopentomutase (413 aa).

Mn(2+) contacts are provided by Asp11, Asp306, His311, Asp347, His348, and His359.

Belongs to the phosphopentomutase family. Requires Mn(2+) as cofactor.

Its subcellular location is the cytoplasm. It carries out the reaction 2-deoxy-alpha-D-ribose 1-phosphate = 2-deoxy-D-ribose 5-phosphate. The catalysed reaction is alpha-D-ribose 1-phosphate = D-ribose 5-phosphate. It participates in carbohydrate degradation; 2-deoxy-D-ribose 1-phosphate degradation; D-glyceraldehyde 3-phosphate and acetaldehyde from 2-deoxy-alpha-D-ribose 1-phosphate: step 1/2. In terms of biological role, isomerase that catalyzes the conversion of deoxy-ribose 1-phosphate (dRib-1-P) and ribose 1-phosphate (Rib-1-P) to deoxy-ribose 5-phosphate (dRib-5-P) and ribose 5-phosphate (Rib-5-P), respectively. The sequence is that of Phosphopentomutase from Helicobacter pylori (strain G27).